We begin with the raw amino-acid sequence, 36 residues long: Fructose-1,6-/sedoheptulose-1,7-bisphosphate aldolase (36 aa).

The protein is Fructose-1,6-/sedoheptulose-1,7-bisphosphate aldolase (cbbA) of Nitrobacter vulgaris.